A 114-amino-acid polypeptide reads, in one-letter code: Non-specific lipid-transfer protein 1 (114 aa).

Residues Met-1–Ala-25 form the signal peptide. Disulfide bonds link Cys-29/Cys-76, Cys-39/Cys-53, Cys-54/Cys-99, and Cys-74/Cys-113.

This sequence belongs to the plant LTP family. In terms of tissue distribution, expressed in seeds and, at very low levels, in pulp of fruit (at protein level).

Its function is as follows. Plant non-specific lipid-transfer proteins transfer phospholipids as well as galactolipids across membranes. May play a role in wax or cutin deposition in the cell walls of expanding epidermal cells and certain secretory tissues. The sequence is that of Non-specific lipid-transfer protein 1 from Actinidia chinensis var. chinensis (Chinese soft-hair kiwi).